The following is a 413-amino-acid chain: D-nopaline dehydrogenase (413 aa).

This sequence belongs to the lysopine/nopaline/octopine/opine/vitopine dehydrogenases family. Homotetramer.

The catalysed reaction is D-nopaline + NADP(+) + H2O = L-arginine + 2-oxoglutarate + NADPH + H(+). The protein is D-nopaline dehydrogenase (nos) of Agrobacterium tumefaciens (strain T37).